The sequence spans 201 residues: tRNA (guanine-N(7)-)-methyltransferase (201 aa).

S-adenosyl-L-methionine is bound by residues Glu-33, Glu-58, Asp-85, and Asp-106. Residue Asp-106 is part of the active site. Substrate is bound by residues Lys-110, Asp-142, and 180–183 (TTYE).

The protein belongs to the class I-like SAM-binding methyltransferase superfamily. TrmB family.

The catalysed reaction is guanosine(46) in tRNA + S-adenosyl-L-methionine = N(7)-methylguanosine(46) in tRNA + S-adenosyl-L-homocysteine. It participates in tRNA modification; N(7)-methylguanine-tRNA biosynthesis. Catalyzes the formation of N(7)-methylguanine at position 46 (m7G46) in tRNA. This is tRNA (guanine-N(7)-)-methyltransferase from Mesomycoplasma hyopneumoniae (strain 232) (Mycoplasma hyopneumoniae).